We begin with the raw amino-acid sequence, 205 residues long: Putative C-type lectin protein FPV001/FPV260 (205 aa).

Residues 84 to 187 (CPRDWISHNG…CSVRRYLVCK (104 aa)) enclose the C-type lectin domain.

The sequence is that of Putative C-type lectin protein FPV001/FPV260 from Fowlpox virus (strain NVSL) (FPV).